A 558-amino-acid polypeptide reads, in one-letter code: Undecaprenyl phosphate-alpha-4-amino-4-deoxy-L-arabinose arabinosyl transferase 1 (558 aa).

The next 12 membrane-spanning stretches (helical) occupy residues 4–24 (GAGL…LVPL), 87–107 (FASV…SWTV), 115–135 (LLAA…TYSV), 136–156 (LDPM…FALR), 178–198 (FMTK…PVAL), 207–227 (LGYG…WALA), 257–277 (APFW…LGLL), 295–315 (FLLL…KGKL), 316–336 (LTYI…YGRE), 355–375 (AFAL…LPWA), 383–403 (WPRI…AAVS), and 411–431 (WALA…IIPQ).

The protein belongs to the glycosyltransferase 83 family.

The protein localises to the cell inner membrane. It catalyses the reaction 4-amino-4-deoxy-alpha-L-arabinopyranosyl di-trans,octa-cis-undecaprenyl phosphate + lipid IVA = lipid IIA + di-trans,octa-cis-undecaprenyl phosphate.. It participates in lipopolysaccharide metabolism; 4-amino-4-deoxy-beta-L-arabinose-lipid A biosynthesis. Functionally, catalyzes the transfer of the L-Ara4N moiety of the glycolipid undecaprenyl phosphate-alpha-L-Ara4N to lipid A. The modified arabinose is attached to lipid A and is required for resistance to polymyxin and cationic antimicrobial peptides. This chain is Undecaprenyl phosphate-alpha-4-amino-4-deoxy-L-arabinose arabinosyl transferase 1, found in Sodalis glossinidius (strain morsitans).